A 271-amino-acid polypeptide reads, in one-letter code: Ribosomal RNA small subunit methyltransferase A (271 aa).

Residues His-11, Leu-13, Gly-38, Glu-58, Asp-86, and Asn-101 each coordinate S-adenosyl-L-methionine.

The protein belongs to the class I-like SAM-binding methyltransferase superfamily. rRNA adenine N(6)-methyltransferase family. RsmA subfamily.

It is found in the cytoplasm. The enzyme catalyses adenosine(1518)/adenosine(1519) in 16S rRNA + 4 S-adenosyl-L-methionine = N(6)-dimethyladenosine(1518)/N(6)-dimethyladenosine(1519) in 16S rRNA + 4 S-adenosyl-L-homocysteine + 4 H(+). Functionally, specifically dimethylates two adjacent adenosines (A1518 and A1519) in the loop of a conserved hairpin near the 3'-end of 16S rRNA in the 30S particle. May play a critical role in biogenesis of 30S subunits. In Helicobacter acinonychis (strain Sheeba), this protein is Ribosomal RNA small subunit methyltransferase A.